A 389-amino-acid polypeptide reads, in one-letter code: Ribonucleoside-diphosphate reductase subunit M2 (389 aa).

S20 bears the Phosphoserine mark. The residue at position 33 (T33) is a Phosphothreonine. The short motif at 49–51 (RRI) is the Cy element. Residues D138, E169, and H172 each coordinate Fe cation. The active site involves Y176. The Fe cation site is built by E232, E266, and H269.

This sequence belongs to the ribonucleoside diphosphate reductase small chain family. In terms of assembly, heterodimer of a large and a small subunit. Interacts (via Cy motif and when phosphorylated at Thr-33) with CCNF; the interaction occurs exclusively in G2 and early M. It depends on Fe cation as a cofactor. Post-translationally, phosphorylation on Ser-20 relieves the inhibitory effect on Wnt signaling. Phosphorylated on Thr-33 by CDK1 and CDK2; predominantly in G2 and M phase. In terms of processing, ubiquitinated by the SCF(CCNF) E3 ubiquitin-protein ligase complex; leading to its degradation by the proteasome.

The protein resides in the cytoplasm. It localises to the nucleus. The catalysed reaction is a 2'-deoxyribonucleoside 5'-diphosphate + [thioredoxin]-disulfide + H2O = a ribonucleoside 5'-diphosphate + [thioredoxin]-dithiol. Provides the precursors necessary for DNA synthesis. Catalyzes the biosynthesis of deoxyribonucleotides from the corresponding ribonucleotides. Inhibits Wnt signaling. This is Ribonucleoside-diphosphate reductase subunit M2 (RRM2) from Macaca fascicularis (Crab-eating macaque).